Here is a 127-residue protein sequence, read N- to C-terminus: Large ribosomal subunit protein bL17 (127 aa).

Belongs to the bacterial ribosomal protein bL17 family. In terms of assembly, part of the 50S ribosomal subunit. Contacts protein L32.

This Haemophilus ducreyi (strain 35000HP / ATCC 700724) protein is Large ribosomal subunit protein bL17.